Reading from the N-terminus, the 401-residue chain is MTLALFHNLTLASMTDGPTPYGLMPKGALVAEAGQVLWSGPQAELPAAFAAVPAHDLGRRLVTPALIDCHTHVVHGGNRANEFEMRLNGASYEEVARAGGGIVSTVSATRTATEAELLASALPRVDAMIAEGVAVIEVKSGYGLDIETELRMLRAARAIGQHRDVTIRTSFLGAHAVPADFAGRADAYIDTVAIPALRTAHAEGLVDAVDGFCEGIAFQPEQIARVFDVARDLGLPMKLHAEQLSNLGGTKLAASYGALSADHIEYLDEDGVAAMARAGMTAVILPGAFYTLRETQKPPVALLRKHRVPMAVSTDANPGSSPMTSLLLAMNMACTLFRLTPEEALAGTTRNAARALGMADRGTLAPGQRADLAVWDVAHPAELAYRIGFNPLYKRIIGGTL.

Fe(3+) is bound by residues histidine 70 and histidine 72. Zn(2+) is bound by residues histidine 70 and histidine 72. Residues arginine 79, tyrosine 142, and histidine 175 each coordinate 4-imidazolone-5-propanoate. Tyrosine 142 serves as a coordination point for N-formimidoyl-L-glutamate. Histidine 240 serves as a coordination point for Fe(3+). Histidine 240 lines the Zn(2+) pocket. Glutamine 243 is a 4-imidazolone-5-propanoate binding site. Aspartate 315 serves as a coordination point for Fe(3+). Aspartate 315 is a binding site for Zn(2+). 2 residues coordinate N-formimidoyl-L-glutamate: asparagine 317 and glycine 319. Serine 320 lines the 4-imidazolone-5-propanoate pocket.

Belongs to the metallo-dependent hydrolases superfamily. HutI family. The cofactor is Zn(2+). Requires Fe(3+) as cofactor.

Its subcellular location is the cytoplasm. It carries out the reaction 4-imidazolone-5-propanoate + H2O = N-formimidoyl-L-glutamate. It functions in the pathway amino-acid degradation; L-histidine degradation into L-glutamate; N-formimidoyl-L-glutamate from L-histidine: step 3/3. Catalyzes the hydrolytic cleavage of the carbon-nitrogen bond in imidazolone-5-propanoate to yield N-formimidoyl-L-glutamate. It is the third step in the universal histidine degradation pathway. The protein is Imidazolonepropionase of Ruegeria pomeroyi (strain ATCC 700808 / DSM 15171 / DSS-3) (Silicibacter pomeroyi).